Reading from the N-terminus, the 1347-residue chain is Protein HUA2-LIKE 3 (1347 aa).

A PWWP domain is found at 24-81 (VGDLVLAKVKGFPAWPAVVDEPEKWGHSADSKKVTVHFFGTQQIAFCNHGDVESFTEE). 3 disordered regions span residues 110–137 (KLKQ…TSQL), 251–320 (DGGP…SGSK), and 383–402 (DSCQ…PCEE). Polar residues predominate over residues 127 to 137 (TAGSSGNTSQL). Positions 302–314 (VESNNNSRNEGNG) are enriched in low complexity. Basic and acidic residues predominate over residues 390–402 (NSHERLNERPCEE). In terms of domain architecture, CID spans 845–986 (DVQCTVESFE…HHIRELDSLS (142 aa)). Disordered regions lie at residues 1037-1069 (RDED…VTPS), 1121-1140 (TSHQ…QNAQ), 1147-1223 (YSNG…YSYM), and 1259-1347 (RMRP…WHQR). A compositionally biased stretch (acidic residues) spans 1038 to 1049 (DEDEGSDSDGGD). Positions 1054–1069 (TPEHESRSLEEHVTPS) are enriched in basic and acidic residues. The span at 1181–1191 (PSYSSRVSLSK) shows a compositional bias: polar residues. The span at 1208 to 1217 (SSHPPPPPPS) shows a compositional bias: pro residues. Residues 1259–1272 (RMRPEPCENRDNWR) show a composition bias toward basic and acidic residues.

As to expression, expressed throughout young primordia, and vegetative and reproductive apices.

It localises to the nucleus. Functionally, probable transcription factor that acts with partial redundancy with HULK1 and HULK2. Plays diverse and essential roles in the control of plant development, physiology and flowering time. This Arabidopsis thaliana (Mouse-ear cress) protein is Protein HUA2-LIKE 3.